The following is a 329-amino-acid chain: Protein Brevis radix-like 4 (329 aa).

Residues 12–37 (SGTSRHHGQQRRGGSPPPRGRTTSVY) form a disordered region. A BRX 1 domain is found at 86 to 142 (REWVAQVEPGVQITFVSLAGGGGNDLKRIRFSREMYDKWQAQKWWGENNERIMELYN). The segment at 151 to 263 (LPTPPRSDDG…TTSCSSRDEV (113 aa)) is disordered. Low complexity-rich tracts occupy residues 222-236 (SNPSERAWQQQQQPQ) and 243-252 (AAASDAMDAA). Residues 253–263 (RTTSCSSRDEV) are compositionally biased toward polar residues. A BRX 2 domain is found at 274–329 (TEWVIQDEPGVYITVRELADGTRELRRVRFSRERFAELNAKLWWEENKERIQAQYL).

It belongs to the BRX family.

The protein resides in the nucleus. This Oryza sativa subsp. japonica (Rice) protein is Protein Brevis radix-like 4 (BRXL4).